Reading from the N-terminus, the 303-residue chain is N-acetyl-D-glucosamine kinase (303 aa).

ATP contacts are provided by residues glycine 4–lysine 11 and glycine 133–leucine 140. Zn(2+) is bound by residues histidine 157, cysteine 177, cysteine 179, and cysteine 184.

This sequence belongs to the ROK (NagC/XylR) family. NagK subfamily.

The catalysed reaction is N-acetyl-D-glucosamine + ATP = N-acetyl-D-glucosamine 6-phosphate + ADP + H(+). It participates in cell wall biogenesis; peptidoglycan recycling. In terms of biological role, catalyzes the phosphorylation of N-acetyl-D-glucosamine (GlcNAc) derived from cell-wall degradation, yielding GlcNAc-6-P. The chain is N-acetyl-D-glucosamine kinase from Salmonella paratyphi A (strain ATCC 9150 / SARB42).